We begin with the raw amino-acid sequence, 208 residues long: MRKIRTKICGITTPEDALYAAHAGADALGLVFYPQSPRAIDIIKAQKIAAALPPFVSVVALFINESAQNIRRILAEVPIHIIQFHGDEDDAFCRQFDRPYIKAIRVQTASDIRNAATRFPNAQALLFDAYHPSEYGGTGHRFDWTLLAEYSGKPWVLAGGLTPENVGEAVRITGAEAVDVSGGVEASKGKKDPAKVAAFIATANRLSR.

The protein belongs to the TrpF family.

The enzyme catalyses N-(5-phospho-beta-D-ribosyl)anthranilate = 1-(2-carboxyphenylamino)-1-deoxy-D-ribulose 5-phosphate. It functions in the pathway amino-acid biosynthesis; L-tryptophan biosynthesis; L-tryptophan from chorismate: step 3/5. The polypeptide is N-(5'-phosphoribosyl)anthranilate isomerase (Neisseria gonorrhoeae (strain NCCP11945)).